The following is an 887-amino-acid chain: Beta-galactosidase 9 (887 aa).

An N-terminal signal peptide occupies residues 1–30 (MAESIRTFSLQWRILSLIIALLVYFPILSG). An N-linked (GlcNAc...) asparagine glycan is attached at asparagine 37. Residue glutamate 194 is the Proton donor of the active site. Residue glutamate 263 is the Nucleophile of the active site. Asparagine 463, asparagine 485, asparagine 496, asparagine 527, and asparagine 785 each carry an N-linked (GlcNAc...) asparagine glycan. The SUEL-type lectin domain occupies 791–877 (NSVAPEVHLH…KTLAVMSRCS (87 aa)). A glycan (N-linked (GlcNAc...) asparagine) is linked at asparagine 881.

This sequence belongs to the glycosyl hydrolase 35 family. Ubiquitous, with higher expression levels in siliques.

It is found in the secreted. The protein resides in the extracellular space. It localises to the apoplast. It catalyses the reaction Hydrolysis of terminal non-reducing beta-D-galactose residues in beta-D-galactosides.. This Arabidopsis thaliana (Mouse-ear cress) protein is Beta-galactosidase 9 (BGAL9).